Reading from the N-terminus, the 765-residue chain is Probable dipeptidyl peptidase 4 (765 aa).

A signal peptide spans 1–14; that stretch reads MKWSILLLVGCAAA. N-linked (GlcNAc...) asparagine glycosylation is found at Asn-35, Asn-78, Asn-101, Asn-110, Asn-169, Asn-218, Asn-465, and Asn-490. Ser-613 (charge relay system) is an active-site residue. N-linked (GlcNAc...) asparagine glycosylation occurs at Asn-665. Catalysis depends on charge relay system residues Asp-690 and His-725.

Belongs to the peptidase S9B family.

The protein localises to the secreted. The enzyme catalyses Release of an N-terminal dipeptide, Xaa-Yaa-|-Zaa-, from a polypeptide, preferentially when Yaa is Pro, provided Zaa is neither Pro nor hydroxyproline.. In terms of biological role, extracellular dipeptidyl-peptidase which removes N-terminal dipeptides sequentially from polypeptides having unsubstituted N-termini provided that the penultimate residue is proline. Contributes to pathogenicity. This chain is Probable dipeptidyl peptidase 4 (dpp4), found in Aspergillus fumigatus (strain ATCC MYA-4609 / CBS 101355 / FGSC A1100 / Af293) (Neosartorya fumigata).